We begin with the raw amino-acid sequence, 477 residues long: Sucrose-6-phosphate hydrolase (477 aa).

Substrate-binding positions include 36–39 (WMND), Gln-55, Trp-63, 98–99 (FS), 160–161 (RD), Glu-215, and Trp-298. The active site involves Asp-39.

It belongs to the glycosyl hydrolase 32 family.

The protein localises to the cytoplasm. It carries out the reaction Hydrolysis of terminal non-reducing beta-D-fructofuranoside residues in beta-D-fructofuranosides.. The protein operates within glycan biosynthesis; sucrose metabolism. Functionally, enables the bacterium to metabolize sucrose as a sole carbon source. This chain is Sucrose-6-phosphate hydrolase (cscA), found in Escherichia coli.